A 353-amino-acid polypeptide reads, in one-letter code: DNA integrity scanning protein DisA (353 aa).

A DAC domain is found at 6–144 (DKELMNILKI…GGIKYVLRDS (139 aa)). Residues G73, L91, and 104 to 108 (TRHRT) contribute to the ATP site.

This sequence belongs to the DisA family. Homooctamer. Requires Mg(2+) as cofactor.

The enzyme catalyses 2 ATP = 3',3'-c-di-AMP + 2 diphosphate. In terms of biological role, participates in a DNA-damage check-point that is active prior to asymmetric division when DNA is damaged. DisA forms globular foci that rapidly scan along the chromosomes during sporulation, searching for lesions. When a lesion is present, DisA pauses at the lesion site. This triggers a cellular response that culminates in a temporary block in sporulation initiation. Functionally, also has diadenylate cyclase activity, catalyzing the condensation of 2 ATP molecules into cyclic di-AMP (c-di-AMP). c-di-AMP acts as a signaling molecule that couples DNA integrity with progression of sporulation. The rise in c-di-AMP level generated by DisA while scanning the chromosome, operates as a positive signal that advances sporulation; upon encountering a lesion, the DisA focus arrests at the damaged site and halts c-di-AMP synthesis. The protein is DNA integrity scanning protein DisA of Clostridium botulinum (strain Okra / Type B1).